The following is a 483-amino-acid chain: Protein adenylyltransferase Fic (483 aa).

A helical transmembrane segment spans residues 20–42; it reads AFFFIAGSLATFVFHALTSSSSV. TPR repeat units follow at residues 107–140 and 141–175; these read ALGA…APKH and PEVL…SPSN. An Inhibitory (S/T)XXXE(G/N) motif motif is present at residues 232-237; the sequence is SVGIEG. Residues Glu-236 and 317-320 each bind ATP; that span reads VGGH. Residues 286-421 enclose the Fido domain; the sequence is ITLKDILELH…IRPFVRFIAD (136 aa). His-364 is an active-site residue. ATP is bound by residues 368–375, 400–401, and Asn-408; these read DGNGRTSR and YY. Residues 464–483 form a disordered region; sequence SAPEPYESGSGLDSGVNGMP.

Belongs to the fic family. In terms of assembly, homodimer.

It localises to the membrane. It catalyses the reaction L-tyrosyl-[protein] + ATP = O-(5'-adenylyl)-L-tyrosyl-[protein] + diphosphate. The catalysed reaction is L-threonyl-[protein] + ATP = 3-O-(5'-adenylyl)-L-threonyl-[protein] + diphosphate. It carries out the reaction 3-O-(5'-adenylyl)-L-threonyl-[protein] + H2O = L-threonyl-[protein] + AMP + H(+). Its activity is regulated as follows. The side chain of Glu-236 determines which of the two opposing activities (AMPylase or de-AMPylase) will take place. In response to endoplasmic reticulum stress, mediates de-AMPylase activity. Adenylyltransferase activity is inhibited by the inhibitory helix present at the N-terminus: Glu-236 binds ATP and competes with ATP-binding at Arg-375, thereby preventing adenylyltransferase activity. In unstressed cells, disengagement of Glu-236 promotes adenylyltransferase activity. Activation dissociates ATP-binding from Glu-236, allowing ordered binding of the entire ATP moiety with the alpha-phosphate in an orientation that is productive for accepting an incoming target hydroxyl side chain. Protein that can both mediate the addition of adenosine 5'-monophosphate (AMP) to specific residues of target proteins (AMPylation), and the removal of the same modification from target proteins (de-AMPylation), depending on the context. The side chain of Glu-236 determines which of the two opposing activities (AMPylase or de-AMPylase) will take place. Acts as a key regulator of the unfolded protein response (UPR) by mediating AMPylation or de-AMPylation of Hsc70-3/BiP. In unstressed cells, acts as an adenylyltransferase by mediating AMPylation of Hsc70-3/BiP at 'Thr-518', thereby inactivating it. In response to endoplasmic reticulum stress, acts as a phosphodiesterase by mediating removal of ATP (de-AMPylation) from Hsc70-3/BiP at 'Thr-518', leading to restore HSPA5/BiP activity. In Drosophila grimshawi (Hawaiian fruit fly), this protein is Protein adenylyltransferase Fic.